The chain runs to 273 residues: Dermonecrotic toxin LapSicTox-alphaII1 (273 aa).

Residue histidine 5 is part of the active site. 2 residues coordinate Mg(2+): glutamate 25 and aspartate 27. The Nucleophile role is filled by histidine 41. 2 cysteine pairs are disulfide-bonded: cysteine 45–cysteine 51 and cysteine 47–cysteine 191. Aspartate 85 serves as a coordination point for Mg(2+).

This sequence belongs to the arthropod phospholipase D family. Class II subfamily. Mg(2+) serves as cofactor. Expressed by the venom gland.

Its subcellular location is the secreted. It catalyses the reaction an N-(acyl)-sphingosylphosphocholine = an N-(acyl)-sphingosyl-1,3-cyclic phosphate + choline. The enzyme catalyses an N-(acyl)-sphingosylphosphoethanolamine = an N-(acyl)-sphingosyl-1,3-cyclic phosphate + ethanolamine. It carries out the reaction a 1-acyl-sn-glycero-3-phosphocholine = a 1-acyl-sn-glycero-2,3-cyclic phosphate + choline. The catalysed reaction is a 1-acyl-sn-glycero-3-phosphoethanolamine = a 1-acyl-sn-glycero-2,3-cyclic phosphate + ethanolamine. In terms of biological role, dermonecrotic toxins cleave the phosphodiester linkage between the phosphate and headgroup of certain phospholipids (sphingolipid and lysolipid substrates), forming an alcohol (often choline) and a cyclic phosphate. This toxin acts on sphingomyelin (SM). It may also act on ceramide phosphoethanolamine (CPE), lysophosphatidylcholine (LPC) and lysophosphatidylethanolamine (LPE), but not on lysophosphatidylserine (LPS), and lysophosphatidylglycerol (LPG). It acts by transphosphatidylation, releasing exclusively cyclic phosphate products as second products. Induces dermonecrosis, hemolysis, increased vascular permeability, edema, inflammatory response, and platelet aggregation. The chain is Dermonecrotic toxin LapSicTox-alphaII1 from Loxosceles apachea (Apache recluse spider).